The primary structure comprises 359 residues: uncharacterized protein (359 aa).

This is an uncharacterized protein from Dictyostelium discoideum (Social amoeba).